A 592-amino-acid chain; its full sequence is Aspartate--tRNA ligase (592 aa).

Residue glutamate 171 coordinates L-aspartate. Residues 195-198 (QLFK) form an aspartate region. Arginine 217 provides a ligand contact to L-aspartate. ATP is bound by residues 217–219 (RDE) and glutamine 226. Position 448 (histidine 448) interacts with L-aspartate. Glutamate 482 lines the ATP pocket. Residue arginine 489 coordinates L-aspartate. 534 to 537 (GLDR) serves as a coordination point for ATP.

It belongs to the class-II aminoacyl-tRNA synthetase family. Type 1 subfamily. In terms of assembly, homodimer.

Its subcellular location is the cytoplasm. The enzyme catalyses tRNA(Asp) + L-aspartate + ATP = L-aspartyl-tRNA(Asp) + AMP + diphosphate. In terms of biological role, catalyzes the attachment of L-aspartate to tRNA(Asp) in a two-step reaction: L-aspartate is first activated by ATP to form Asp-AMP and then transferred to the acceptor end of tRNA(Asp). This is Aspartate--tRNA ligase from Vibrio atlanticus (strain LGP32) (Vibrio splendidus (strain Mel32)).